The primary structure comprises 983 residues: Kinesin-like protein KIN-14I (983 aa).

The Calponin-homology (CH) domain occupies 44 to 166 (ASRRYEAANW…CVLAIKSYDE (123 aa)). 2 stretches are compositionally biased toward polar residues: residues 203-214 (SLSRTSSINNEK) and 278-287 (ESTSSQNNRS). Disordered stretches follow at residues 203 to 227 (SLSR…LSSP) and 276 to 295 (PRES…LGER). The 326-residue stretch at 399 to 724 (SIRVYCRVRP…LKFAERVATV (326 aa)) folds into the Kinesin motor domain. 481-488 (GQTGSGKT) lines the ATP pocket. The stretch at 731–758 (VNNDTSDVKELKEQIATLKAALARKEAE) forms a coiled coil. Disordered regions lie at residues 802-824 (TVNS…DDRS) and 921-983 (TRSN…NARH). A compositionally biased stretch (polar residues) spans 939 to 951 (SPQSRNNSNNTVS).

The protein belongs to the TRAFAC class myosin-kinesin ATPase superfamily. Kinesin family. KIN-14 subfamily.

In Arabidopsis thaliana (Mouse-ear cress), this protein is Kinesin-like protein KIN-14I.